A 145-amino-acid chain; its full sequence is 3-dehydroquinate dehydratase (145 aa).

Catalysis depends on Tyr23, which acts as the Proton acceptor. The substrate site is built by Asn75, His81, and Asp88. Catalysis depends on His101, which acts as the Proton donor. Residues 102–103 (IS) and Arg112 each bind substrate.

The protein belongs to the type-II 3-dehydroquinase family. Homododecamer.

It catalyses the reaction 3-dehydroquinate = 3-dehydroshikimate + H2O. The protein operates within metabolic intermediate biosynthesis; chorismate biosynthesis; chorismate from D-erythrose 4-phosphate and phosphoenolpyruvate: step 3/7. Catalyzes a trans-dehydration via an enolate intermediate. The polypeptide is 3-dehydroquinate dehydratase (Caldicellulosiruptor saccharolyticus (strain ATCC 43494 / DSM 8903 / Tp8T 6331)).